Consider the following 368-residue polypeptide: V-type proton ATPase subunit C (368 aa).

This sequence belongs to the V-ATPase C subunit family. As to quaternary structure, V-ATPase is a heteromultimeric enzyme composed of a peripheral catalytic V1 complex (components A to H) attached to an integral membrane V0 proton pore complex (components: a, c, c', c'' and d).

Functionally, subunit of the peripheral V1 complex of vacuolar ATPase. Subunit C is necessary for the assembly of the catalytic sector of the enzyme and is likely to have a specific function in its catalytic activity. V-ATPase is responsible for acidifying a variety of intracellular compartments in eukaryotic cells. This chain is V-type proton ATPase subunit C (vatC), found in Dictyostelium discoideum (Social amoeba).